Here is a 285-residue protein sequence, read N- to C-terminus: Probable enoyl-CoA hydratase echA12 (285 aa).

It belongs to the enoyl-CoA hydratase/isomerase family.

The catalysed reaction is a (3S)-3-hydroxyacyl-CoA = a (2E)-enoyl-CoA + H2O. It catalyses the reaction a 4-saturated-(3S)-3-hydroxyacyl-CoA = a (3E)-enoyl-CoA + H2O. In terms of biological role, could possibly oxidize fatty acids using specific components. The chain is Probable enoyl-CoA hydratase echA12 (echA12) from Mycobacterium tuberculosis (strain CDC 1551 / Oshkosh).